The sequence spans 255 residues: Hydroxyacylglutathione hydrolase (255 aa).

Positions 53, 55, 57, 58, 110, 127, and 165 each coordinate Zn(2+).

This sequence belongs to the metallo-beta-lactamase superfamily. Glyoxalase II family. Monomer. Zn(2+) is required as a cofactor.

It carries out the reaction an S-(2-hydroxyacyl)glutathione + H2O = a 2-hydroxy carboxylate + glutathione + H(+). The protein operates within secondary metabolite metabolism; methylglyoxal degradation; (R)-lactate from methylglyoxal: step 2/2. Thiolesterase that catalyzes the hydrolysis of S-D-lactoyl-glutathione to form glutathione and D-lactic acid. This chain is Hydroxyacylglutathione hydrolase, found in Xanthomonas oryzae pv. oryzae (strain MAFF 311018).